Here is an 864-residue protein sequence, read N- to C-terminus: DNA mismatch repair protein MutS (864 aa).

623 to 630 (GPNMGGKS) is a binding site for ATP.

The protein belongs to the DNA mismatch repair MutS family.

In terms of biological role, this protein is involved in the repair of mismatches in DNA. It is possible that it carries out the mismatch recognition step. This protein has a weak ATPase activity. The sequence is that of DNA mismatch repair protein MutS from Polaromonas sp. (strain JS666 / ATCC BAA-500).